An 873-amino-acid polypeptide reads, in one-letter code: DNA mismatch repair protein MutS (873 aa).

625-632 lines the ATP pocket; it reads GPNMGGKS.

The protein belongs to the DNA mismatch repair MutS family.

Its function is as follows. This protein is involved in the repair of mismatches in DNA. It is possible that it carries out the mismatch recognition step. This protein has a weak ATPase activity. This is DNA mismatch repair protein MutS from Xanthomonas campestris pv. campestris (strain 8004).